Reading from the N-terminus, the 516-residue chain is Probable malate:quinone oxidoreductase (516 aa).

Belongs to the MQO family. It depends on FAD as a cofactor.

The enzyme catalyses (S)-malate + a quinone = a quinol + oxaloacetate. The protein operates within carbohydrate metabolism; tricarboxylic acid cycle; oxaloacetate from (S)-malate (quinone route): step 1/1. This is Probable malate:quinone oxidoreductase from Mycobacterium sp. (strain MCS).